The primary structure comprises 2469 residues: Large tegument protein deneddylase (2469 aa).

Positions 1–237 (MDIHPLFKKL…LHGPNIDLTS (237 aa)) are deubiquitination activity. Positions 13 to 225 (EGIASTHQAD…IMNHYRVINY (213 aa)) constitute a Peptidase C76 domain. Catalysis depends on residues C33, D163, and H165. 2 disordered regions span residues 244 to 318 (EISP…ALTP) and 346 to 377 (HPVERTTPGTDSLLSGINSTTKREDDLEDDDN). Pro residues predominate over residues 260-271 (PKTPRTPKPATP). A region of interest (interaction with inner tegument protein) is located at residue S286. Residues 295–309 (KPPKIPKTSKKSKKV) are compositionally biased toward basic residues. Positions 352–365 (TPGTDSLLSGINST) are enriched in polar residues.

The protein belongs to the herpesviridae large tegument protein family. In terms of assembly, interacts with host CUL1 and CUL4A; these interactions inhibit the E3 ligase activity of cullins. Interacts with inner tegument protein. Interacts with capsid vertex specific component CVC2. Interacts with the major capsid protein/MCP.

The protein localises to the virion tegument. It is found in the host cytoplasm. Its subcellular location is the host nucleus. The enzyme catalyses Thiol-dependent hydrolysis of ester, thioester, amide, peptide and isopeptide bonds formed by the C-terminal Gly of ubiquitin (a 76-residue protein attached to proteins as an intracellular targeting signal).. Its function is as follows. Large tegument protein that plays multiple roles in the viral cycle. During viral entry, remains associated with the capsid while most of the tegument is detached and participates in the capsid transport toward the host nucleus. Plays a role in the routing of the capsid at the nuclear pore complex and subsequent uncoating. Within the host nucleus, acts as a deneddylase and promotes the degradation of nuclear CRLs (cullin-RING ubiquitin ligases) and thereby stabilizes nuclear CRL substrates, while cytoplasmic CRLs remain unaffected. These modifications prevent host cell cycle S-phase progression and create a favorable environment allowing efficient viral genome replication. Participates later in the secondary envelopment of capsids. Indeed, plays a linker role for the association of the outer viral tegument to the capsids together with the inner tegument protein. The sequence is that of Large tegument protein deneddylase (64) from Saimiriine herpesvirus 2 (strain 11) (SaHV-2).